Reading from the N-terminus, the 492-residue chain is Cell division protein FtsA (492 aa).

2 disordered regions span residues 288–307 (GEETPSQNVQIPTTGSDGHE) and 429–458 (YTRTAHQSSPTPHIHSSPTERNLSDLKAPS). Over residues 291–303 (TPSQNVQIPTTGS) the composition is skewed to polar residues. Positions 436-447 (SSPTPHIHSSPT) are enriched in low complexity.

It belongs to the FtsA/MreB family. In terms of assembly, self-interacts. Interacts with FtsZ.

It is found in the cell inner membrane. Its function is as follows. Cell division protein that is involved in the assembly of the Z ring. May serve as a membrane anchor for the Z ring. This chain is Cell division protein FtsA, found in Helicobacter pylori (strain ATCC 700392 / 26695) (Campylobacter pylori).